A 300-amino-acid polypeptide reads, in one-letter code: Spermatogenesis-associated serine-rich protein 1 (300 aa).

The segment covering 1–10 has biased composition (polar residues); that stretch reads MSPSMLTGNS. Disordered regions lie at residues 1–42 and 64–91; these read MSPS…MTEV and TPSGKSVSSSSSVETGPSVSEPPGLPRV. Over residues 27 to 42 the composition is skewed to basic and acidic residues; that stretch reads QLEKVPEKRDSGMTEV. Low complexity predominate over residues 64 to 85; sequence TPSGKSVSSSSSVETGPSVSEP. A Phosphoserine modification is found at serine 113.

The protein is Spermatogenesis-associated serine-rich protein 1 (SPATS1) of Homo sapiens (Human).